We begin with the raw amino-acid sequence, 513 residues long: Zinc finger CCCH-type with G patch domain-containing protein (513 aa).

Met-1 carries the N-acetylmethionine modification. Residues 92–131 (PVAPGAELETVPSRETGPGPTEPGQEEDDGEDEEGGAALS) are disordered. Residues 115–126 (GQEEDDGEDEEG) show a composition bias toward acidic residues. Residues 176 to 202 (KSLKPCPFFLEGKCRFQENCRFSHGQV) form a C3H1-type zinc finger. A disordered region spans residues 267–298 (LPPLRTDPAGSSDSDGSDADDPSYARVVEPGA). 2 positions are modified to phosphoserine: Ser-278 and Ser-355. The 47-residue stretch at 315-361 (TRGIGSRLLAKMGYEFGKGLGRRADGRVEPVHAVVLPRGKSLDQCAE) folds into the G-patch domain. Disordered stretches follow at residues 367–394 (TRAG…PPPR) and 493–513 (QEAG…MTEF). Residues 497–513 (LQREQRKADTHKKMTEF) show a composition bias toward basic and acidic residues.

As to quaternary structure, interacts with CHD4/Mi-2; the interaction is direct.

It is found in the nucleus. Transcription repressor that specifically binds the 5'-GGAG[GA]A[GA]A-3' consensus sequence. Represses transcription by recruiting the chromatin multiprotein complex NuRD to target promoters. Negatively regulates expression of EGFR, a gene involved in cell proliferation, survival and migration. Its ability to repress genes of the EGFR pathway suggest it may act as a tumor suppressor. The chain is Zinc finger CCCH-type with G patch domain-containing protein (ZGPAT) from Ovis aries (Sheep).